A 498-amino-acid chain; its full sequence is MPTPSAPSPQPKGFRRAVSEQDAKQAEAVTSPRFIGRRQSLIEDARKEREAAAAAAAAAVASSEPGNPLEAVVFEERDGNAVLNLLFSLRGTKPSSLSRAVKVFETFEAKIHHLETRPAQRPLAGSPHLEYFVRFEVPSGDLAALLSSVRRVSDDVRSAREDKVPWFPRKVSELDKCHHLVTKFDPDLDLDHPGFSDQVYRQRRKLIAEIAFQYKHGEPIPHVEYTAEEIATWKEVYVTLKGLYATHACREHLEGFQLLERYCGYREDSIPQLEDVSRFLKERTGFQLRPVAGLLSARDFLASLAFRVFQCTQYIRHASSPMHSPEPDCCHELLGHVPMLADRTFAQFSQDIGLASLGASDEEIEKLSTVYWFTVEFGLCKQNGELKAYGAGLLSSYGELLHSLSEEPEVRAFDPDTAAVQPYQDQTYQPVYFVSESFNDAKDKLRNYASRIQRPFSVKFDPYTLAIDVLDSPHTIQRSLEGVQDELHTLAHALSAIS.

Residues 1–10 (MPTPSAPSPQ) show a composition bias toward pro residues. The disordered stretch occupies residues 1–31 (MPTPSAPSPQPKGFRRAVSEQDAKQAEAVTS). Serine 19 is subject to Phosphoserine; by CaMK2. Phosphoserine is present on serine 31. Serine 40 bears the Phosphoserine; by CaMK2 and PKA mark. Residues histidine 331, histidine 336, and glutamate 376 each coordinate Fe cation. Serine 472 carries the phosphoserine modification.

The protein belongs to the biopterin-dependent aromatic amino acid hydroxylase family. As to quaternary structure, homotetramer. Interacts (when phosphorylated at Ser-19) with YWHAG; one YWHAG dimer binds to one TH tetramer and this interaction may influence the phosphorylation and dephosphorylation of other sites. Interacts with NT5DC2; the interaction results in reduced phosphorylation and decreased catalytic activity of TH. Fe(2+) is required as a cofactor. Post-translationally, phosphorylated on Ser-19, Ser-31 and Ser-40 by several protein kinases with different site specificities. Phosphorylation at Ser-31 and Ser-40 leads to an increase of TH activity. Phosphorylation at Ser-40 activates the enzyme and also counteracts the feedback inhibition of TH by catecholamines. Phosphorylation of Ser-19 and Ser-31 triggers the proteasomal degradation of TH through the ubiquitin-proteasome pathway. Phosphorylation at Ser-31 facilitates transport of TH from the soma to the nerve terminals via the microtubule network. Phosphorylation at Ser-19 induces the high-affinity binding to the 14-3-3 protein YWHAG; this interaction may influence the phosphorylation and dephosphorylation of other sites. Ser-19 increases the phosphorylation at Ser-40 in a hierarchical manner, leading to increased activity.

It localises to the cytoplasm. It is found in the perinuclear region. The protein localises to the nucleus. The protein resides in the cell projection. Its subcellular location is the axon. It localises to the cytoplasmic vesicle. It is found in the secretory vesicle. The protein localises to the synaptic vesicle. The enzyme catalyses (6R)-L-erythro-5,6,7,8-tetrahydrobiopterin + L-tyrosine + O2 = (4aS,6R)-4a-hydroxy-L-erythro-5,6,7,8-tetrahydrobiopterin + L-dopa. Its pathway is catecholamine biosynthesis; dopamine biosynthesis; dopamine from L-tyrosine: step 1/2. With respect to regulation, inhibited in feedback fashion by the catecholamine neurotransmitters, especially by dopamine in competition with tetrahydrobiopterin. Phosphorylation of several Ser/Thr residues in the N-terminus regulates the catalytic activity. Ser-31 and Ser-40 are readily phosphorylated to activate the catalytic activity. A cysteine modification induced by N-ethylmaleimide (NEM), inhibits tyrosine 3-monooxygenase activity through the modification of the Cys-177. In terms of biological role, catalyzes the conversion of L-tyrosine to L-dihydroxyphenylalanine (L-Dopa), the rate-limiting step in the biosynthesis of catecholamines, dopamine, noradrenaline, and adrenaline. Uses tetrahydrobiopterin and molecular oxygen to convert tyrosine to L-Dopa. In addition to tyrosine, is able to catalyze the hydroxylation of phenylalanine and tryptophan but with lower specificity. Positively regulates the regression of retinal hyaloid vessels during postnatal development. This chain is Tyrosine 3-monooxygenase (Th), found in Rattus norvegicus (Rat).